A 433-amino-acid polypeptide reads, in one-letter code: ATP-dependent protease ATPase subunit HslU (433 aa).

ATP contacts are provided by residues Val-18, 60–65, Asp-246, Glu-311, and Arg-383; that span reads GVGKTE.

Belongs to the ClpX chaperone family. HslU subfamily. In terms of assembly, a double ring-shaped homohexamer of HslV is capped on each side by a ring-shaped HslU homohexamer. The assembly of the HslU/HslV complex is dependent on binding of ATP.

It is found in the cytoplasm. Its function is as follows. ATPase subunit of a proteasome-like degradation complex; this subunit has chaperone activity. The binding of ATP and its subsequent hydrolysis by HslU are essential for unfolding of protein substrates subsequently hydrolyzed by HslV. HslU recognizes the N-terminal part of its protein substrates and unfolds these before they are guided to HslV for hydrolysis. The polypeptide is ATP-dependent protease ATPase subunit HslU (Rhodopseudomonas palustris (strain BisB5)).